The following is a 382-amino-acid chain: Alanine racemase 1 (382 aa).

Lys39 (proton acceptor; specific for D-alanine) is an active-site residue. Lys39 bears the N6-(pyridoxal phosphate)lysine mark. Arg138 lines the substrate pocket. Residue Tyr265 is the Proton acceptor; specific for L-alanine of the active site. Position 312 (Met312) interacts with substrate.

This sequence belongs to the alanine racemase family. It depends on pyridoxal 5'-phosphate as a cofactor.

It catalyses the reaction L-alanine = D-alanine. The protein operates within amino-acid biosynthesis; D-alanine biosynthesis; D-alanine from L-alanine: step 1/1. Catalyzes the interconversion of L-alanine and D-alanine. May also act on other amino acids. The sequence is that of Alanine racemase 1 (alr1) from Staphylococcus aureus (strain MRSA252).